Consider the following 1117-residue polypeptide: Lid2 complex component snt2 (1117 aa).

The 120-residue stretch at Glu89–Val208 folds into the BAH domain. A Phorbol-ester/DAG-type zinc finger spans residues Asn227–Lys282. The segment at Pro245–Ala297 adopts a PHD-type 1 zinc-finger fold. Residues Ser361–Ser380 form a disordered region. A PHD-type 2 zinc finger spans residues Lys798–Asn882. The C2HC pre-PHD-type zinc-finger motif lies at Asp890–Val925. A PHD-type 3; degenerate zinc finger spans residues Lys948–Ser1002.

Component of the Lid2 complex composed of ash2, jmj3, lid2, sdc1 and snt2.

The protein resides in the nucleus. This Schizosaccharomyces pombe (strain 972 / ATCC 24843) (Fission yeast) protein is Lid2 complex component snt2 (snt2).